The sequence spans 280 residues: Pantothenate synthetase (280 aa).

30-37 (MGALHRGH) lines the ATP pocket. The Proton donor role is filled by histidine 37. Position 61 (glutamine 61) interacts with (R)-pantoate. Glutamine 61 is a binding site for beta-alanine. 148–151 (GEKD) serves as a coordination point for ATP. Glutamine 154 is a (R)-pantoate binding site. ATP is bound by residues valine 177 and 185–188 (LSSR).

This sequence belongs to the pantothenate synthetase family. In terms of assembly, homodimer.

Its subcellular location is the cytoplasm. It carries out the reaction (R)-pantoate + beta-alanine + ATP = (R)-pantothenate + AMP + diphosphate + H(+). It participates in cofactor biosynthesis; (R)-pantothenate biosynthesis; (R)-pantothenate from (R)-pantoate and beta-alanine: step 1/1. Its function is as follows. Catalyzes the condensation of pantoate with beta-alanine in an ATP-dependent reaction via a pantoyl-adenylate intermediate. In Azobacteroides pseudotrichonymphae genomovar. CFP2, this protein is Pantothenate synthetase.